A 188-amino-acid polypeptide reads, in one-letter code: Elongation factor P (188 aa).

The protein belongs to the elongation factor P family.

It is found in the cytoplasm. It functions in the pathway protein biosynthesis; polypeptide chain elongation. Its function is as follows. Involved in peptide bond synthesis. Stimulates efficient translation and peptide-bond synthesis on native or reconstituted 70S ribosomes in vitro. Probably functions indirectly by altering the affinity of the ribosome for aminoacyl-tRNA, thus increasing their reactivity as acceptors for peptidyl transferase. This Acidiphilium cryptum (strain JF-5) protein is Elongation factor P.